A 148-amino-acid polypeptide reads, in one-letter code: 15 kDa excretory/secretory protein (148 aa).

The signal sequence occupies residues 1-19; sequence MFFAFAVLLIALATREAYG.

This sequence to T.colubriformis 30 kDa antigenic glycoprotein.

It localises to the secreted. This chain is 15 kDa excretory/secretory protein, found in Haemonchus contortus (Barber pole worm).